We begin with the raw amino-acid sequence, 79 residues long: Large ribosomal subunit protein uL29 (79 aa).

It belongs to the universal ribosomal protein uL29 family.

This is Large ribosomal subunit protein uL29 from Tropheryma whipplei (strain TW08/27) (Whipple's bacillus).